A 278-amino-acid polypeptide reads, in one-letter code: Elongation factor Ts (278 aa).

The involved in Mg(2+) ion dislocation from EF-Tu stretch occupies residues 80 to 83 (TDFV).

The protein belongs to the EF-Ts family.

It is found in the cytoplasm. Its function is as follows. Associates with the EF-Tu.GDP complex and induces the exchange of GDP to GTP. It remains bound to the aminoacyl-tRNA.EF-Tu.GTP complex up to the GTP hydrolysis stage on the ribosome. This is Elongation factor Ts from Paenarthrobacter aurescens (strain TC1).